The sequence spans 170 residues: Microfibrillar-associated protein 5 (170 aa).

Residues 1-20 (MTFFGPKVLLLLTALIMSSG) form the signal peptide. The short motif at 30–32 (RGD) is the Cell attachment site element. A glycan (N-linked (GlcNAc...) asparagine) is linked at asparagine 76.

It belongs to the MFAP family. In terms of assembly, interacts with TGFB2. Interacts with BMP2. Interacts with FBN1 (via N-terminal domain) and FBN2. Post-translationally, forms intermolecular disulfide bonds either with other MAGP-2 molecules or with other components of the microfibrils. In terms of tissue distribution, associated with fibrillin-containing microfibrils of the developing nuchal ligament.

The protein localises to the secreted. It localises to the extracellular space. It is found in the extracellular matrix. May play a role in hematopoiesis. In the cardiovascular system, could regulate growth factors or participate in cell signaling in maintaining large vessel integrity. Component of the elastin-associated microfibrils. The sequence is that of Microfibrillar-associated protein 5 (MFAP5) from Bos taurus (Bovine).